The chain runs to 339 residues: UPF0450 protein C17orf58 (339 aa).

An N-terminal signal peptide occupies residues 1 to 17 (MTARAFWLLCLIVGSSP). Residues 17 to 191 (PEAPVAERKT…PQRDAEPGAE (175 aa)) are disordered. The segment covering 21-36 (VAERKTSPPHSRKPDS) has biased composition (basic and acidic residues). The segment covering 56 to 72 (APQRPRAAEVAPAARAW) has biased composition (low complexity). The segment covering 112–125 (ASPRREPASEDAPR) has biased composition (basic and acidic residues). The span at 132–163 (LRFPAARPPALATEGSAGHAHPNRPRAAALAP) shows a compositional bias: low complexity. 3 disulfides stabilise this stretch: C193/C267, C197/C271, and C208/C338. Residues 193–338 (CARACRSDLD…QIQGAIHTQC (146 aa)) enclose the NTR domain.

It belongs to the UPF0450 family.

In Homo sapiens (Human), this protein is UPF0450 protein C17orf58 (C17orf58).